We begin with the raw amino-acid sequence, 771 residues long: Probable aconitate hydratase, mitochondrial (771 aa).

Substrate is bound by residues Gln-86 and 179-181; that span reads DSH. [4Fe-4S] cluster contacts are provided by Cys-372, Cys-435, and Cys-438. Residues Arg-461, Arg-466, Arg-594, and 657–658 each bind substrate; that span reads SR.

It belongs to the aconitase/IPM isomerase family. As to quaternary structure, monomer. The cofactor is [4Fe-4S] cluster.

It is found in the mitochondrion. The catalysed reaction is citrate = D-threo-isocitrate. Its pathway is carbohydrate metabolism; tricarboxylic acid cycle; isocitrate from oxaloacetate: step 2/2. Catalyzes the isomerization of citrate to isocitrate via cis-aconitate. The sequence is that of Probable aconitate hydratase, mitochondrial (aco2) from Dictyostelium discoideum (Social amoeba).